A 177-amino-acid polypeptide reads, in one-letter code: Large ribosomal subunit protein uL6 (177 aa).

Belongs to the universal ribosomal protein uL6 family. As to quaternary structure, part of the 50S ribosomal subunit.

Functionally, this protein binds to the 23S rRNA, and is important in its secondary structure. It is located near the subunit interface in the base of the L7/L12 stalk, and near the tRNA binding site of the peptidyltransferase center. The polypeptide is Large ribosomal subunit protein uL6 (Dinoroseobacter shibae (strain DSM 16493 / NCIMB 14021 / DFL 12)).